The sequence spans 376 residues: Methionine import ATP-binding protein MetN 2 (376 aa).

The segment at 1-25 (MTATAQRQRPIDTTGAGQRAQQAEL) is disordered. The ABC transporter domain maps to 34-273 (VRFINLGKTY…PQHEVSKTLL (240 aa)). Position 70 to 77 (70 to 77 (GRSGAGKS)) interacts with ATP.

It belongs to the ABC transporter superfamily. Methionine importer (TC 3.A.1.24) family. In terms of assembly, the complex is composed of two ATP-binding proteins (MetN), two transmembrane proteins (MetI) and a solute-binding protein (MetQ).

Its subcellular location is the cell inner membrane. The catalysed reaction is L-methionine(out) + ATP + H2O = L-methionine(in) + ADP + phosphate + H(+). It catalyses the reaction D-methionine(out) + ATP + H2O = D-methionine(in) + ADP + phosphate + H(+). Functionally, part of the ABC transporter complex MetNIQ involved in methionine import. Responsible for energy coupling to the transport system. The chain is Methionine import ATP-binding protein MetN 2 from Pseudomonas syringae pv. syringae (strain B728a).